The chain runs to 405 residues: uncharacterized protein (405 aa).

This is an uncharacterized protein from Schizosaccharomyces pombe (strain 972 / ATCC 24843) (Fission yeast).